The primary structure comprises 411 residues: uncharacterized protein (411 aa).

The UmuC domain maps to Phe-20–Gly-199.

The protein belongs to the DNA polymerase type-Y family.

This is an uncharacterized protein from Mycoplasma genitalium (strain ATCC 33530 / DSM 19775 / NCTC 10195 / G37) (Mycoplasmoides genitalium).